The chain runs to 324 residues: Phospho-N-acetylmuramoyl-pentapeptide-transferase (324 aa).

Helical transmembrane passes span 9-29 (TFAVAFIITVIGVPLFIPFLV), 54-74 (MGAVVFITAMLISFLIFSFIG), 77-97 (VSAATWLLFIALALFGALGFL), 117-137 (FLGQVAISILFYLVYHFSDFA), 147-167 (IEVDLGWFFVIFILFWLVGFS), 176-196 (LDGLVSGLSVIAFSAFGVIAF), 201-221 (MDVAIFCFAIVGGMLGFLLFN), 227-247 (IFMGDTGSLALGGSIAAVSIL), 253-273 (LLLLIGIIFVIETASVILQVF), and 304-324 (VLTFWGIGLVGAVISVCVVIF).

This sequence belongs to the glycosyltransferase 4 family. MraY subfamily. It depends on Mg(2+) as a cofactor.

The protein localises to the cell membrane. It catalyses the reaction UDP-N-acetyl-alpha-D-muramoyl-L-alanyl-gamma-D-glutamyl-meso-2,6-diaminopimeloyl-D-alanyl-D-alanine + di-trans,octa-cis-undecaprenyl phosphate = di-trans,octa-cis-undecaprenyl diphospho-N-acetyl-alpha-D-muramoyl-L-alanyl-D-glutamyl-meso-2,6-diaminopimeloyl-D-alanyl-D-alanine + UMP. The protein operates within cell wall biogenesis; peptidoglycan biosynthesis. Its function is as follows. Catalyzes the initial step of the lipid cycle reactions in the biosynthesis of the cell wall peptidoglycan: transfers peptidoglycan precursor phospho-MurNAc-pentapeptide from UDP-MurNAc-pentapeptide onto the lipid carrier undecaprenyl phosphate, yielding undecaprenyl-pyrophosphoryl-MurNAc-pentapeptide, known as lipid I. The protein is Phospho-N-acetylmuramoyl-pentapeptide-transferase of Listeria welshimeri serovar 6b (strain ATCC 35897 / DSM 20650 / CCUG 15529 / CIP 8149 / NCTC 11857 / SLCC 5334 / V8).